The primary structure comprises 105 residues: Small ribosomal subunit protein eS24 (105 aa).

This sequence belongs to the eukaryotic ribosomal protein eS24 family.

This is Small ribosomal subunit protein eS24 from Haloquadratum walsbyi (strain DSM 16790 / HBSQ001).